Reading from the N-terminus, the 186-residue chain is Peptide deformylase (186 aa).

The Fe cation site is built by Cys99 and His141. Glu142 is an active-site residue. His145 lines the Fe cation pocket.

The protein belongs to the polypeptide deformylase family. Fe(2+) is required as a cofactor.

It carries out the reaction N-terminal N-formyl-L-methionyl-[peptide] + H2O = N-terminal L-methionyl-[peptide] + formate. In terms of biological role, removes the formyl group from the N-terminal Met of newly synthesized proteins. Requires at least a dipeptide for an efficient rate of reaction. N-terminal L-methionine is a prerequisite for activity but the enzyme has broad specificity at other positions. This chain is Peptide deformylase, found in Chlamydia pneumoniae (Chlamydophila pneumoniae).